A 399-amino-acid chain; its full sequence is MAKEKFSRNKPHVNIGTIGHVDHGKTTLTAAISAVLSRRGLAELKDYDNIDNAPEEKERGITIATSHIEYETENRHYAHVDCPGHADYVKNMITGAAQMDGAILVVSAADGPMPQTREHILLSRQVGVPYIVVFMNKADMVDDAELLELVEMEIRELLSSYDFPGDDTPIISGSALQALEEAKAGQDGEWSKKILDLMAAVDDYIPTPARDTDKDFLMPIEDVFSISGRGTVVTGRIEKGVVKVGDTIEIVGIRDTQTTTVTGVEMFRKEMDQGEAGDNVGVLLRGTKKEDVERGMVLAKPKSITPHTDFEAEVYILNKDEGGRHTPFFNNYRPQFYVRTTDVTGAIKLAEGVEMVMPGDNVRITVSLIAPVALEEGTRFAIREGGRTVGSGVVSKIIK.

In terms of domain architecture, tr-type G spans 10-209 (KPHVNIGTIG…AVDDYIPTPA (200 aa)). The G1 stretch occupies residues 19–26 (GHVDHGKT). GTP is bound at residue 19–26 (GHVDHGKT). Thr-26 is a Mg(2+) binding site. Residues 60–64 (GITIA) are G2. Positions 81 to 84 (DCPG) are G3. GTP is bound by residues 81–85 (DCPGH) and 136–139 (NKAD). The G4 stretch occupies residues 136-139 (NKAD). The G5 stretch occupies residues 174–176 (SAL).

This sequence belongs to the TRAFAC class translation factor GTPase superfamily. Classic translation factor GTPase family. EF-Tu/EF-1A subfamily. In terms of assembly, monomer.

It localises to the cytoplasm. It catalyses the reaction GTP + H2O = GDP + phosphate + H(+). In terms of biological role, GTP hydrolase that promotes the GTP-dependent binding of aminoacyl-tRNA to the A-site of ribosomes during protein biosynthesis. This Campylobacter lari (strain RM2100 / D67 / ATCC BAA-1060) protein is Elongation factor Tu.